We begin with the raw amino-acid sequence, 413 residues long: L-cysteine:1D-myo-inositol 2-amino-2-deoxy-alpha-D-glucopyranoside ligase (413 aa).

Residues 1 to 21 form a disordered region; that stretch reads MQSWSDTALPSVPGQGPPLRL. Cysteine 43 is a binding site for Zn(2+). L-cysteinyl-5'-AMP-binding positions include 43 to 46, threonine 58, and 81 to 83; these read CGIT and NVT. The 'HIGH' region motif lies at 45 to 55; sequence ITPYDATHLGH. A 'ERGGDP' region motif is present at residues 187–192; that stretch reads ERGGDP. An L-cysteinyl-5'-AMP-binding site is contributed by tryptophan 227. Cysteine 231 is a binding site for Zn(2+). 249–251 contributes to the L-cysteinyl-5'-AMP binding site; that stretch reads GSD. Residue histidine 256 coordinates Zn(2+). Isoleucine 283 serves as a coordination point for L-cysteinyl-5'-AMP. The 'KMSKS' region signature appears at 289-293; sequence KMSKS.

The protein belongs to the class-I aminoacyl-tRNA synthetase family. MshC subfamily. As to quaternary structure, monomer. It depends on Zn(2+) as a cofactor.

It catalyses the reaction 1D-myo-inositol 2-amino-2-deoxy-alpha-D-glucopyranoside + L-cysteine + ATP = 1D-myo-inositol 2-(L-cysteinylamino)-2-deoxy-alpha-D-glucopyranoside + AMP + diphosphate + H(+). Its function is as follows. Catalyzes the ATP-dependent condensation of GlcN-Ins and L-cysteine to form L-Cys-GlcN-Ins. In Rhodococcus erythropolis (strain PR4 / NBRC 100887), this protein is L-cysteine:1D-myo-inositol 2-amino-2-deoxy-alpha-D-glucopyranoside ligase.